The following is a 305-amino-acid chain: tRNA dimethylallyltransferase 1 (305 aa).

Position 10 to 17 (10 to 17 (GPTASGKT)) interacts with ATP. A substrate-binding site is contributed by 12 to 17 (TASGKT). Residues 35–38 (DSRQ) form an interaction with substrate tRNA region.

It belongs to the IPP transferase family. Monomer. Mg(2+) is required as a cofactor.

The catalysed reaction is adenosine(37) in tRNA + dimethylallyl diphosphate = N(6)-dimethylallyladenosine(37) in tRNA + diphosphate. Its function is as follows. Catalyzes the transfer of a dimethylallyl group onto the adenine at position 37 in tRNAs that read codons beginning with uridine, leading to the formation of N6-(dimethylallyl)adenosine (i(6)A). In Syntrophus aciditrophicus (strain SB), this protein is tRNA dimethylallyltransferase 1.